We begin with the raw amino-acid sequence, 154 residues long: MSKKAPGANVIAQNKKARHIYELSDNHEAGISLTGSEVKSLRAGHVNFRDSYVDFRNGEAFLVGLHIAPYDNAGYAQHDPDRDRKLLLHAHEIENLARSVEQKGYTVVPTKLYFARGKVKVDIAVGRGKKLHDQREDLKRRAEDRDTQRELARF.

The tract at residues 134-154 is disordered; the sequence is QREDLKRRAEDRDTQRELARF.

This sequence belongs to the SmpB family.

It is found in the cytoplasm. Functionally, required for rescue of stalled ribosomes mediated by trans-translation. Binds to transfer-messenger RNA (tmRNA), required for stable association of tmRNA with ribosomes. tmRNA and SmpB together mimic tRNA shape, replacing the anticodon stem-loop with SmpB. tmRNA is encoded by the ssrA gene; the 2 termini fold to resemble tRNA(Ala) and it encodes a 'tag peptide', a short internal open reading frame. During trans-translation Ala-aminoacylated tmRNA acts like a tRNA, entering the A-site of stalled ribosomes, displacing the stalled mRNA. The ribosome then switches to translate the ORF on the tmRNA; the nascent peptide is terminated with the 'tag peptide' encoded by the tmRNA and targeted for degradation. The ribosome is freed to recommence translation, which seems to be the essential function of trans-translation. This Nitratidesulfovibrio vulgaris (strain ATCC 29579 / DSM 644 / CCUG 34227 / NCIMB 8303 / VKM B-1760 / Hildenborough) (Desulfovibrio vulgaris) protein is SsrA-binding protein.